The chain runs to 113 residues: U10-theraphotoxin-Hs2a (113 aa).

The first 21 residues, 1 to 21 (MNTVRVTFLLVFVLAVSLGQA), serve as a signal peptide directing secretion. The propeptide occupies 22-67 (DEDGNRMEKRQKKTEAENLLLPKLEELDAKLWEEDSVESRNSRQKR). 3 disulfides stabilise this stretch: C68–C86, C75–C91, and C85–C106.

It belongs to the neurotoxin 14 (magi-1) family. 02 (HWTX-XVIc) subfamily. As to expression, expressed by the venom gland.

The protein resides in the secreted. Its function is as follows. Probable ion channel inhibitor. This Cyriopagopus schmidti (Chinese bird spider) protein is U10-theraphotoxin-Hs2a.